A 187-amino-acid chain; its full sequence is Threonylcarbamoyl-AMP synthase (187 aa).

A YrdC-like domain is found at 4 to 187; the sequence is TLTLSEAVTA…DARSGHILRL (184 aa).

It belongs to the SUA5 family. TsaC subfamily.

It localises to the cytoplasm. It carries out the reaction L-threonine + hydrogencarbonate + ATP = L-threonylcarbamoyladenylate + diphosphate + H2O. Its function is as follows. Required for the formation of a threonylcarbamoyl group on adenosine at position 37 (t(6)A37) in tRNAs that read codons beginning with adenine. Catalyzes the conversion of L-threonine, HCO(3)(-)/CO(2) and ATP to give threonylcarbamoyl-AMP (TC-AMP) as the acyladenylate intermediate, with the release of diphosphate. This is Threonylcarbamoyl-AMP synthase from Xylella fastidiosa (strain 9a5c).